Reading from the N-terminus, the 359-residue chain is Small ribosomal subunit protein mS22 (359 aa).

It belongs to the mitochondrion-specific ribosomal protein mS22 family. In terms of assembly, component of the mitochondrial ribosome small subunit (28S) which comprises a 12S rRNA and about 30 distinct proteins.

It is found in the mitochondrion. The sequence is that of Small ribosomal subunit protein mS22 (MRPS22) from Bos taurus (Bovine).